A 513-amino-acid chain; its full sequence is Bifunctional purine biosynthesis protein PurH (513 aa).

The MGS-like domain occupies 1-144 (MKRALISVSD…KNYQDVTVVT (144 aa)).

The protein belongs to the PurH family.

It carries out the reaction (6R)-10-formyltetrahydrofolate + 5-amino-1-(5-phospho-beta-D-ribosyl)imidazole-4-carboxamide = 5-formamido-1-(5-phospho-D-ribosyl)imidazole-4-carboxamide + (6S)-5,6,7,8-tetrahydrofolate. It catalyses the reaction IMP + H2O = 5-formamido-1-(5-phospho-D-ribosyl)imidazole-4-carboxamide. Its pathway is purine metabolism; IMP biosynthesis via de novo pathway; 5-formamido-1-(5-phospho-D-ribosyl)imidazole-4-carboxamide from 5-amino-1-(5-phospho-D-ribosyl)imidazole-4-carboxamide (10-formyl THF route): step 1/1. The protein operates within purine metabolism; IMP biosynthesis via de novo pathway; IMP from 5-formamido-1-(5-phospho-D-ribosyl)imidazole-4-carboxamide: step 1/1. The polypeptide is Bifunctional purine biosynthesis protein PurH (Lactobacillus acidophilus (strain ATCC 700396 / NCK56 / N2 / NCFM)).